A 97-amino-acid polypeptide reads, in one-letter code: Co-chaperonin GroES (97 aa).

Belongs to the GroES chaperonin family. As to quaternary structure, heptamer of 7 subunits arranged in a ring. Interacts with the chaperonin GroEL.

The protein resides in the cytoplasm. Together with the chaperonin GroEL, plays an essential role in assisting protein folding. The GroEL-GroES system forms a nano-cage that allows encapsulation of the non-native substrate proteins and provides a physical environment optimized to promote and accelerate protein folding. GroES binds to the apical surface of the GroEL ring, thereby capping the opening of the GroEL channel. The protein is Co-chaperonin GroES of Buchnera aphidicola subsp. Thelaxes suberi.